Here is a 226-residue protein sequence, read N- to C-terminus: Ribonuclease T (226 aa).

One can recognise an Exonuclease domain in the interval 20-194 (VVIDVETAGF…YDTERTAELF (175 aa)). Residues Asp-23, Glu-25, His-181, and Asp-186 each coordinate Mg(2+). Catalysis depends on His-181, which acts as the Proton donor/acceptor.

The protein belongs to the RNase T family. In terms of assembly, homodimer. The cofactor is Mg(2+).

Trims short 3' overhangs of a variety of RNA species, leaving a one or two nucleotide 3' overhang. Responsible for the end-turnover of tRNA: specifically removes the terminal AMP residue from uncharged tRNA (tRNA-C-C-A). Also appears to be involved in tRNA biosynthesis. This is Ribonuclease T from Shewanella denitrificans (strain OS217 / ATCC BAA-1090 / DSM 15013).